A 308-amino-acid chain; its full sequence is Transaldolase (308 aa).

Lysine 125 acts as the Schiff-base intermediate with substrate in catalysis.

This sequence belongs to the transaldolase family. Type 1 subfamily. In terms of assembly, homodimer.

It localises to the cytoplasm. It carries out the reaction D-sedoheptulose 7-phosphate + D-glyceraldehyde 3-phosphate = D-erythrose 4-phosphate + beta-D-fructose 6-phosphate. Its pathway is carbohydrate degradation; pentose phosphate pathway; D-glyceraldehyde 3-phosphate and beta-D-fructose 6-phosphate from D-ribose 5-phosphate and D-xylulose 5-phosphate (non-oxidative stage): step 2/3. In terms of biological role, transaldolase is important for the balance of metabolites in the pentose-phosphate pathway. The chain is Transaldolase from Pseudomonas putida (strain W619).